The sequence spans 116 residues: NADPH-dependent 7-cyano-7-deazaguanine reductase (116 aa).

Cys-31 serves as the catalytic Thioimide intermediate. The active-site Proton donor is the Asp-38. Residues 53–55 and 72–73 contribute to the substrate site; these read IEL and YE.

Belongs to the GTP cyclohydrolase I family. QueF type 1 subfamily.

It localises to the cytoplasm. It carries out the reaction 7-aminomethyl-7-carbaguanine + 2 NADP(+) = 7-cyano-7-deazaguanine + 2 NADPH + 3 H(+). It participates in tRNA modification; tRNA-queuosine biosynthesis. Its function is as follows. Catalyzes the NADPH-dependent reduction of 7-cyano-7-deazaguanine (preQ0) to 7-aminomethyl-7-deazaguanine (preQ1). This is NADPH-dependent 7-cyano-7-deazaguanine reductase from Chlorobaculum parvum (strain DSM 263 / NCIMB 8327) (Chlorobium vibrioforme subsp. thiosulfatophilum).